Here is a 486-residue protein sequence, read N- to C-terminus: Protein nucleotidyltransferase YdiU (486 aa).

Residues glycine 90, glycine 92, arginine 93, lysine 113, aspartate 125, glycine 126, arginine 176, and arginine 183 each coordinate ATP. The active-site Proton acceptor is the aspartate 252. Positions 253 and 262 each coordinate Mg(2+). Position 262 (aspartate 262) interacts with ATP.

It belongs to the SELO family. Requires Mg(2+) as cofactor. Mn(2+) is required as a cofactor.

The enzyme catalyses L-seryl-[protein] + ATP = 3-O-(5'-adenylyl)-L-seryl-[protein] + diphosphate. The catalysed reaction is L-threonyl-[protein] + ATP = 3-O-(5'-adenylyl)-L-threonyl-[protein] + diphosphate. It catalyses the reaction L-tyrosyl-[protein] + ATP = O-(5'-adenylyl)-L-tyrosyl-[protein] + diphosphate. It carries out the reaction L-histidyl-[protein] + UTP = N(tele)-(5'-uridylyl)-L-histidyl-[protein] + diphosphate. The enzyme catalyses L-seryl-[protein] + UTP = O-(5'-uridylyl)-L-seryl-[protein] + diphosphate. The catalysed reaction is L-tyrosyl-[protein] + UTP = O-(5'-uridylyl)-L-tyrosyl-[protein] + diphosphate. Nucleotidyltransferase involved in the post-translational modification of proteins. It can catalyze the addition of adenosine monophosphate (AMP) or uridine monophosphate (UMP) to a protein, resulting in modifications known as AMPylation and UMPylation. This Pseudomonas entomophila (strain L48) protein is Protein nucleotidyltransferase YdiU.